The primary structure comprises 87 residues: Small ribosomal subunit protein uS15 (87 aa).

The protein belongs to the universal ribosomal protein uS15 family. As to quaternary structure, part of the 30S ribosomal subunit. Forms a bridge to the 50S subunit in the 70S ribosome, contacting the 23S rRNA.

Its function is as follows. One of the primary rRNA binding proteins, it binds directly to 16S rRNA where it helps nucleate assembly of the platform of the 30S subunit by binding and bridging several RNA helices of the 16S rRNA. Functionally, forms an intersubunit bridge (bridge B4) with the 23S rRNA of the 50S subunit in the ribosome. The sequence is that of Small ribosomal subunit protein uS15 from Pseudothermotoga lettingae (strain ATCC BAA-301 / DSM 14385 / NBRC 107922 / TMO) (Thermotoga lettingae).